The primary structure comprises 751 residues: C2 domain-containing protein At1g53590 (751 aa).

2 consecutive transmembrane segments (helical) span residues 2–22 (ESSL…ISSL) and 26–46 (HAFF…RYVM). The SMP-LTD domain maps to 68 to 262 (DSESVRWMNY…QPNMLVVDME (195 aa)). The region spanning 267 to 381 (PTSENWFFVD…RGGQRNDMWL (115 aa)) is the C2 domain. Ca(2+) is bound by residues Asp298, Asp304, Asp352, Asp354, and Asp359. 2 disordered regions span residues 469–519 (QIWE…GRGL) and 572–751 (SGPL…SSSK). Positions 472-482 (EPRKGKSRRLD) are enriched in basic and acidic residues. Polar residues predominate over residues 483–502 (SQIQRTPNDESLSNGSSSTD). The segment covering 590-611 (NSGKGHMKDVAKSFLKQAEKSA) has biased composition (basic and acidic residues). The span at 612–624 (KQIKHAFSRKGSM) shows a compositional bias: basic residues. Basic and acidic residues predominate over residues 625–634 (KPRDGHKEIV). Acidic residues predominate over residues 639-651 (SGTDSESSDDDDA). Basic and acidic residues-rich tracts occupy residues 664-681 (KLTR…DHVD) and 703-751 (VEAK…SSSK). A coiled-coil region spans residues 701–728 (TDVEAKEEKLKEAAESETRDMDTAMNIK).

The protein belongs to the extended synaptotagmin family. It depends on Ca(2+) as a cofactor.

The protein localises to the membrane. In Arabidopsis thaliana (Mouse-ear cress), this protein is C2 domain-containing protein At1g53590 (NTMC2T6.1).